Consider the following 484-residue polypeptide: MTNEVRVRYAPSPTGYPHLGNIRTAMFNWLFARHNGGKFIVRIEDTDRERYVEGAVESILESLNWLGLDWDEGPDKGGDYGPYYQSERLFLYRQAAERLVTEGKAYYCHCSSERLDKMREEQIARKEPPGYDRCCRDLCLGQKEGAVIRFKIPLEGQTTFIDLIRGEVTFDNAKQDDFVILKSDGFPTYHLASVVDDHAMQISHVLRAEEWLPSTPKHLMLYKALGYTPPQYAHLPMILGPDRSKLSKRHGATSTIEYKQAGYLPETMVNFLSLLGWAYDDKTELFSRKQLIEYFCLEKVSKTAAIFNYEKLDWMNGMYIRTLSAPDLASRAIPFLEKDERIAASGRLNFDYTTKVMPLIQERVKKLSELAELCWFIYSDNISYDPASLIDKKLTKDESLCALKAAFARLEALANFDAVSMEEHIRPLAAELELKPGQLFGMLRTASTGQQVAPPLFQTMEVLGRERCLGRIAMAIARLSELPS.

The 'HIGH' region signature appears at Pro-11–Asn-21. Cys-108, Cys-110, Cys-135, and Asp-137 together coordinate Zn(2+). The 'KMSKS' region motif lies at Lys-245–Arg-249. Lys-248 is an ATP binding site.

This sequence belongs to the class-I aminoacyl-tRNA synthetase family. Glutamate--tRNA ligase type 1 subfamily. In terms of assembly, monomer. Requires Zn(2+) as cofactor.

It is found in the cytoplasm. It carries out the reaction tRNA(Glu) + L-glutamate + ATP = L-glutamyl-tRNA(Glu) + AMP + diphosphate. Catalyzes the attachment of glutamate to tRNA(Glu) in a two-step reaction: glutamate is first activated by ATP to form Glu-AMP and then transferred to the acceptor end of tRNA(Glu). This is Glutamate--tRNA ligase from Dehalococcoides mccartyi (strain ATCC BAA-2266 / KCTC 15142 / 195) (Dehalococcoides ethenogenes (strain 195)).